We begin with the raw amino-acid sequence, 162 residues long: SsrA-binding protein (162 aa).

It belongs to the SmpB family.

The protein resides in the cytoplasm. Its function is as follows. Required for rescue of stalled ribosomes mediated by trans-translation. Binds to transfer-messenger RNA (tmRNA), required for stable association of tmRNA with ribosomes. tmRNA and SmpB together mimic tRNA shape, replacing the anticodon stem-loop with SmpB. tmRNA is encoded by the ssrA gene; the 2 termini fold to resemble tRNA(Ala) and it encodes a 'tag peptide', a short internal open reading frame. During trans-translation Ala-aminoacylated tmRNA acts like a tRNA, entering the A-site of stalled ribosomes, displacing the stalled mRNA. The ribosome then switches to translate the ORF on the tmRNA; the nascent peptide is terminated with the 'tag peptide' encoded by the tmRNA and targeted for degradation. The ribosome is freed to recommence translation, which seems to be the essential function of trans-translation. This Granulibacter bethesdensis (strain ATCC BAA-1260 / CGDNIH1) protein is SsrA-binding protein.